A 133-amino-acid chain; its full sequence is Holo-[acyl-carrier-protein] synthase (133 aa).

Residues Asp-8 and Glu-56 each coordinate Mg(2+).

This sequence belongs to the P-Pant transferase superfamily. AcpS family. The cofactor is Mg(2+).

The protein localises to the cytoplasm. The catalysed reaction is apo-[ACP] + CoA = holo-[ACP] + adenosine 3',5'-bisphosphate + H(+). Its function is as follows. Transfers the 4'-phosphopantetheine moiety from coenzyme A to a Ser of acyl-carrier-protein. This is Holo-[acyl-carrier-protein] synthase from Clostridium perfringens (strain ATCC 13124 / DSM 756 / JCM 1290 / NCIMB 6125 / NCTC 8237 / Type A).